The following is a 102-amino-acid chain: U6 snRNA-associated Sm-like protein LSm3 (102 aa).

Ala-2 is subject to N-acetylalanine. The Sm domain maps to Glu-16–Val-101.

This sequence belongs to the snRNP Sm proteins family. In terms of assembly, component of the precatalytic spliceosome (spliceosome B complex). Component of the U4/U6-U5 tri-snRNP complex, a building block of the precatalytic spliceosome (spliceosome B complex). The U4/U6-U5 tri-snRNP complex is composed of the U4, U6 and U5 snRNAs and at least PRPF3, PRPF4, PRPF6, PRPF8, PRPF31, SNRNP200, TXNL4A, SNRNP40, SNRPB, SNRPD1, SNRPD2, SNRPD3, SNRPE, SNRPF, SNRPG, DDX23, CD2BP2, PPIH, SNU13, EFTUD2, SART1 and USP39, plus LSM2, LSM3, LSM4, LSM5, LSM6, LSM7 and LSM8. LSM2, LSM3, LSM4, LSM5, LSM6, LSM7 and LSM8 form a heptameric, ring-shaped subcomplex (the LSM2-8 complex) that is part of the U4/U6-U5 tri-snRNP complex and the precatalytic spliceosome.

The protein localises to the nucleus. Functionally, plays a role in pre-mRNA splicing as component of the U4/U6-U5 tri-snRNP complex that is involved in spliceosome assembly, and as component of the precatalytic spliceosome (spliceosome B complex). The heptameric LSM2-8 complex binds specifically to the 3'-terminal U-tract of U6 snRNA. This is U6 snRNA-associated Sm-like protein LSm3 (LSM3) from Bos taurus (Bovine).